A 122-amino-acid polypeptide reads, in one-letter code: Phospholipase A2 crotoxin basic subunit CBd (122 aa).

7 cysteine pairs are disulfide-bonded: Cys-26/Cys-115, Cys-28/Cys-44, Cys-43/Cys-95, Cys-49/Cys-122, Cys-50/Cys-88, Cys-57/Cys-81, and Cys-75/Cys-86. Residues Tyr-27, Gly-29, and Gly-31 each coordinate Ca(2+). Residue His-47 is part of the active site. Asp-48 serves as a coordination point for Ca(2+). Residue Asp-89 is part of the active site.

The protein belongs to the phospholipase A2 family. Group II subfamily. D49 sub-subfamily. In terms of assembly, heterodimer of one of the acidic (CA1, CA2, CA3 or CA4) and one of the basic (CBa1, CBa2, CBb, CBc or CBd) subunits; non-covalently linked. The acidic subunit is non-toxic, without enzymatic activity and comprises 3 peptides that are cross-linked by 5 disulfide bridges. The basic subunit is toxic, has phospholipase A2 activity and is composed of a single chain. Multiple variants of each subunit give different crotoxin complexes that can be subdivided into 2 classes: (1) those of high toxicity, low PLA2 activity (CBb, CBc and CBd linked with high affinity to any CA) and high stability (K(d)=4.5 nM) and (2) those of moderate toxicity, high PLA2 activity (CBa2 linked with low affinity to any CA) and low stability (K(d)=25 nM). Interacts with crotoxin inhibitor from Crotalus serum (CICS); the interaction leads to dissociation of the CA-CB heterodimer and to inhibition of PLA2 activity of the CB subunit. Interacts with human NBD1 domain of CFTR. The cofactor is Ca(2+). As to expression, expressed by the venom gland.

It is found in the secreted. The enzyme catalyses a 1,2-diacyl-sn-glycero-3-phosphocholine + H2O = a 1-acyl-sn-glycero-3-phosphocholine + a fatty acid + H(+). Heterodimer CA-CB: Crotoxin is a potent presynaptic neurotoxin that possesses phospholipase A2 (PLA2) activity and exerts a lethal action by blocking neuromuscular transmission. It consists of a non-covalent association of a basic and weakly toxic PLA2 subunit (CBa2, CBb, CBc, or CBd), with a small acidic, non-enzymatic and non-toxic subunit (CA1, CA2, CA3 or CA4). The complex acts by binding to a specific 48-kDa protein (R48) receptor located on presynaptic membranes, forming a transient ternary complex CA-CB-R48, followed by dissociation of the CA-CB complex and release of the CA subunit. At equilibrium, only the CB subunits remain associated with the specific crotoxin receptor. In addition to neurotoxicity, crotoxin has been found to exert myotoxicity, nephrotoxicity, and cardiovascular toxicity. Moreover, anti-inflammatory, immunomodulatory, anti-tumor and analgesic effects of crotoxin have also been reported. Functionally, monomer CBd: The basic subunit of crotoxin is a snake venom phospholipase A2 (PLA2) that exhibits weak neurotoxicity (10-fold less than the heterodimer) and very strong anticoagulant effects by binding to factor Xa (F10) and inhibiting the prothrombinase activity. In addition, it shows the same effects described for the heterodimer and binds the nucleotide-binding domain (NBD1) of CFTR chloride channels and increases the channel current. PLA2 catalyzes the calcium-dependent hydrolysis of the 2-acyl groups in 3-sn-phosphoglycerides. The protein is Phospholipase A2 crotoxin basic subunit CBd of Crotalus durissus terrificus (South American rattlesnake).